We begin with the raw amino-acid sequence, 195 residues long: Ras-related protein Rab-31 (195 aa).

Residues Gly-16, Gly-18, Lys-19, Ser-20, Ser-21, Asp-32, and His-33 each coordinate GTP. Ser-20 contributes to the Mg(2+) binding site. Short sequence motifs (switch) lie at residues 30–42 (HFDHNISPTIGAS) and 63–79 (AGQERFHSLAPMYYRGS). Ser-36 is modified (phosphoserine). Residues Thr-38, Gly-64, Asn-119, Asp-122, Ala-150, and Lys-151 each contribute to the GTP site. Thr-38 lines the Mg(2+) pocket. 2 S-geranylgeranyl cysteine lipidation sites follow: Cys-194 and Cys-195.

It belongs to the small GTPase superfamily. Rab family. Interacts with OCRL. Interacts with NGFR. Interacts (in GDP-bound form) with RIN3 and GAPVD1, which function as guanine exchange factors (GEF). Interacts (in GTP-bound form) with EEA1. Interacts with EGFR. Interacts (in GTP-bound form) with APPL2; interaction contributes to or enhances recruitment of APPL2 to the phagosomes; interaction enhances Fc-gamma receptor-mediated phagocytosis through PI3K/Akt signaling in macrophages. Requires Mg(2+) as cofactor. As to expression, highest expression in placenta and brain with lower levels in heart and lung. Not detected in liver, skeletal muscle, kidney or pancreas.

Its subcellular location is the golgi apparatus. It localises to the trans-Golgi network. The protein resides in the trans-Golgi network membrane. The protein localises to the early endosome. It is found in the cytoplasmic vesicle. Its subcellular location is the phagosome. It localises to the phagosome membrane. The enzyme catalyses GTP + H2O = GDP + phosphate + H(+). With respect to regulation, regulated by guanine nucleotide exchange factors (GEFs) including RIN3 and GAPVD1 which promote the exchange of bound GDP for free GTP. Regulated by GTPase activating proteins (GAPs) which increase the GTP hydrolysis activity. Inhibited by GDP dissociation inhibitors (GDIs) which prevent Rab-GDP dissociation. Its function is as follows. The small GTPases Rab are key regulators of intracellular membrane trafficking, from the formation of transport vesicles to their fusion with membranes. Rabs cycle between an inactive GDP-bound form and an active GTP-bound form that is able to recruit to membranes different set of downstream effectors directly responsible for vesicle formation, movement, tethering and fusion. Required for the integrity and for normal function of the Golgi apparatus and the trans-Golgi network. Plays a role in insulin-stimulated translocation of GLUT4 to the cell membrane. Plays a role in M6PR transport from the trans-Golgi network to endosomes. Plays a role in the internalization of EGFR from the cell membrane into endosomes. Plays a role in the maturation of phagosomes that engulf pathogens, such as S.aureus and M.tuberculosis. The sequence is that of Ras-related protein Rab-31 from Homo sapiens (Human).